The chain runs to 911 residues: Beta-galactosidase 12 (911 aa).

Positions Met1–Ala25 are cleaved as a signal peptide. Catalysis depends on Glu192, which acts as the Proton donor. The Nucleophile role is filled by Glu262. Residues Asn263, Asn389, Asn473, and Asn777 are each glycosylated (N-linked (GlcNAc...) asparagine). An SUEL-type lectin domain is found at Glu744–Ala831.

This sequence belongs to the glycosyl hydrolase 35 family.

The protein resides in the secreted. It is found in the extracellular space. The protein localises to the apoplast. The catalysed reaction is Hydrolysis of terminal non-reducing beta-D-galactose residues in beta-D-galactosides.. In Oryza sativa subsp. japonica (Rice), this protein is Beta-galactosidase 12.